Reading from the N-terminus, the 591-residue chain is Protein phosphatase EYA1 (591 aa).

3 disordered regions span residues 1 to 95 (MEMQ…SYPH), 150 to 169 (GLSQ…GTSF), and 239 to 319 (MTSS…PDSD). A compositionally biased stretch (low complexity) spans 8 to 23 (SPHSRLSGSSESPSGP). Residues 28–53 (SHINSTSMTPNGTEVKTEPMSSSEIA) show a composition bias toward polar residues. Over residues 56 to 75 (AADGSLDSFSGSALGSSSFS) the composition is skewed to low complexity. Residues 78–87 (PAHPFSPPQI) show a composition bias toward pro residues. Over residues 240–252 (TSSNTSPTTPSTN) the composition is skewed to low complexity. Polar residues predominate over residues 253–286 (ATYQLQEPPSGVTSQAVTDPTAEYSTIHSPSTPI). Positions 287–302 (KETDSERLRRGSDGKS) are enriched in basic and acidic residues. The active-site Nucleophile is the D327. Mg(2+) contacts are provided by D327, D329, and D555. D329 (proton donor) is an active-site residue.

It belongs to the HAD-like hydrolase superfamily. EYA family. As to quaternary structure, probably interacts with SIX2, SIX4 and SIX5. Interacts with H2AX in response to DNA damage. Interacts with SIX3; promotes EYA1 translocation to the nucleus. Mg(2+) serves as cofactor. In terms of processing, sumoylated with SUMO1. In terms of tissue distribution, extensively expressed in cranial placodes, branchial arches, CNS and developing eye and nose.

The protein localises to the cytoplasm. Its subcellular location is the nucleus. It catalyses the reaction O-phospho-L-tyrosyl-[protein] + H2O = L-tyrosyl-[protein] + phosphate. It carries out the reaction O-phospho-L-seryl-[protein] + H2O = L-seryl-[protein] + phosphate. The enzyme catalyses O-phospho-L-threonyl-[protein] + H2O = L-threonyl-[protein] + phosphate. Functions both as protein phosphatase and as transcriptional coactivator for SIX1, and probably also for SIX2, SIX4 and SIX5. Tyrosine phosphatase that dephosphorylates 'Tyr-142' of histone H2AX (H2AXY142ph) and promotes efficient DNA repair via the recruitment of DNA repair complexes containing MDC1. 'Tyr-142' phosphorylation of histone H2AX plays a central role in DNA repair and acts as a mark that distinguishes between apoptotic and repair responses to genotoxic stress. Its function as histone phosphatase may contribute to its function in transcription regulation during organogenesis. Also has phosphatase activity with proteins phosphorylated on Ser and Thr residues (in vitro). Required for normal embryonic development of the craniofacial and trunk skeleton, kidneys and ears. Together with SIX1, it plays an important role in hypaxial muscle development; in this it is functionally redundant with EYA2. This chain is Protein phosphatase EYA1 (Eya1), found in Mus musculus (Mouse).